A 607-amino-acid chain; its full sequence is Type 3 secretion system secretin (607 aa).

Residues 1 to 33 (MAPACTTAHRRRAPLAAVLMLSLLPLLSPHADA) form the signal peptide. Positions 277-332 (ASSSDRVPVSPPLPGSGAAAAAGSPASVWPELSKGRRDESNPIDAGGGAELASDAP) are disordered. Residues 291-306 (GSGAAAAAGSPASVWP) are compositionally biased toward low complexity.

Belongs to the bacterial secretin family. T3SS SctC subfamily. As to quaternary structure, the core secretion machinery of the T3SS is composed of approximately 20 different proteins, including cytoplasmic components, a base, an export apparatus and a needle. This subunit is part of the base, which anchors the injectisome in the bacterial cell envelope. Forms a stable homooligomeric complex.

It is found in the cell outer membrane. Component of the type III secretion system (T3SS), also called injectisome, which is used to inject bacterial effector proteins into eukaryotic host cells. Forms a ring-shaped multimeric structure with an apparent central pore in the outer membrane. Necessary for both basic pathogenicity and the induction of the hypersensitive response in resistant plants. The chain is Type 3 secretion system secretin from Xanthomonas euvesicatoria.